A 270-amino-acid chain; its full sequence is Large ribosomal subunit protein uL30 (270 aa).

At Met-1 the chain carries N-acetylmethionine. A run of 6 repeats spans residues 7–18, 19–29, 30–40, 41–52, 53–64, and 65–76. The 6 X 12 AA tandem repeats stretch occupies residues 7–76; the sequence is KKKKVATVPG…ARRKLIYEKA (70 aa). The residue at position 39 (Thr-39) is a Phosphothreonine. The residue at position 146 (Lys-146) is an N6-acetyllysine. Lys-149 carries the N6-succinyllysine modification. At Tyr-161 the chain carries Phosphotyrosine.

Belongs to the universal ribosomal protein uL30 family. Component of the large ribosomal subunit. Homodimer. Interacts with DHX33.

The protein resides in the cytoplasm. Functionally, component of the large ribosomal subunit. The ribosome is a large ribonucleoprotein complex responsible for the synthesis of proteins in the cell. Binds to G-rich structures in 28S rRNA and in mRNAs. Plays a regulatory role in the translation apparatus; inhibits cell-free translation of mRNAs. The protein is Large ribosomal subunit protein uL30 (Rpl7) of Mus musculus (Mouse).